The following is a 262-amino-acid chain: Octanoyltransferase (262 aa).

The region spanning 60-248 (GTADELVWLV…AFEMVFGPTR (189 aa)) is the BPL/LPL catalytic domain. Residues 99-106 (RGGEYTYH), 179-181 (AIG), and 192-194 (GLS) each bind substrate. Residue Cys-210 is the Acyl-thioester intermediate of the active site.

This sequence belongs to the LipB family.

Its subcellular location is the cytoplasm. It catalyses the reaction octanoyl-[ACP] + L-lysyl-[protein] = N(6)-octanoyl-L-lysyl-[protein] + holo-[ACP] + H(+). The protein operates within protein modification; protein lipoylation via endogenous pathway; protein N(6)-(lipoyl)lysine from octanoyl-[acyl-carrier-protein]: step 1/2. Its function is as follows. Catalyzes the transfer of endogenously produced octanoic acid from octanoyl-acyl-carrier-protein onto the lipoyl domains of lipoate-dependent enzymes. Lipoyl-ACP can also act as a substrate although octanoyl-ACP is likely to be the physiological substrate. The sequence is that of Octanoyltransferase from Sinorhizobium medicae (strain WSM419) (Ensifer medicae).